The sequence spans 267 residues: MAPHGDGLSDIEEPEVDAQSEILRPISSVVFVIAMQAEALPLVNKFGLSETTDSPLGKGLPWVLYHGVHKDLRINVVCPGRDAALGIDSVGTVPASLITFASIQALKPDIIINAGTCGGFKVKGANIGDVFLVSDVVFHDRRIPIPMFDLYGVGLRQAFSTPNLLKELNLKIGRLSTGDSLDMSTQDETLIIANDATLKDMEGAAVAYVADLLKIPVVFLKAVTDLVDGDKPTAEEFLQNLTVVTAALEGTATKVINFINGRNLSDL.

The active-site Proton acceptor is the glutamate 38. S-methyl-5'-thioadenosine contacts are provided by residues threonine 116, 199–202, and aspartate 225; that span reads KDME. Lysine 199 and aspartate 225 together coordinate adenine. Aspartate 225 (proton donor) is an active-site residue.

This sequence belongs to the PNP/UDP phosphorylase family. MtnN subfamily. As to quaternary structure, homodimer. Interacts with CBL3 in a calcium-dependent manner. Expressed in roots, leaves, stems, cauline leaves and flowers.

It carries out the reaction S-methyl-5'-thioadenosine + H2O = 5-(methylsulfanyl)-D-ribose + adenine. It functions in the pathway amino-acid biosynthesis; L-methionine biosynthesis via salvage pathway; S-methyl-5-thio-alpha-D-ribose 1-phosphate from S-methyl-5'-thioadenosine (hydrolase route): step 1/2. Inhibited by CBL3 in a calcium-dependent manner. Inhibited by 5'-methylthiotubercidin (MTT) and by formycin A (FMA). Its function is as follows. Enzyme of the methionine cycle that catalyzes the irreversible cleavage of the glycosidic bond in 5'-methylthioadenosine (MTA) to adenine and 5'-methylthioribose. Contributes to the maintenance of AdoMet homeostasis and is required to sustain high rates of ethylene synthesis. Inactive towards S-adenosylhomocysteine (SAH/AdoHcy). The polypeptide is 5'-methylthioadenosine nucleosidase (MTN1) (Arabidopsis thaliana (Mouse-ear cress)).